Consider the following 1118-residue polypeptide: Carbamoyl phosphate synthase arginine-specific large chain (1118 aa).

The tract at residues 23–420 is carboxyphosphate synthetic domain; the sequence is QLVEGVNSVL…AFQKALRQVD (398 aa). ATP is bound by residues Arg-150, Arg-190, Gly-196, Gly-197, Lys-227, Leu-229, Glu-234, Gly-260, Val-261, His-262, Gln-303, and Glu-317. Residues 154–346 form the ATP-grasp 1 domain; the sequence is ASALKDINIP…LAYTAAKIGL (193 aa). 3 residues coordinate Mg(2+): Gln-303, Glu-317, and Asn-319. 3 residues coordinate Mn(2+): Gln-303, Glu-317, and Asn-319. Positions 421-573 are oligomerization domain; the sequence is PSLLGFQGST…YTTYNATKND (153 aa). Positions 574–958 are carbamoyl phosphate synthetic domain; sequence VEFNENGMLV…SYWTAIQSTM (385 aa). The region spanning 698–890 is the ATP-grasp 2 domain; sequence SSILDSIDVD…FIEIAVKAFL (193 aa). Positions 734, 773, 775, 780, 805, 806, 807, 808, 848, and 861 each coordinate ATP. Mg(2+)-binding residues include Gln-848, Glu-861, and Asn-863. Residues Gln-848, Glu-861, and Asn-863 each coordinate Mn(2+). The segment at 959 to 1102 is allosteric domain; it reads NFHVPLPPSG…KILESHDVIV (144 aa). An MGS-like domain is found at 960-1118; the sequence is FHVPLPPSGI…WDEFIGFKAY (159 aa).

It belongs to the CarB family. Heterodimer composed of 2 chains; the small (or glutamine) chain promotes the hydrolysis of glutamine to ammonia, which is used by the large (or ammonia) chain to synthesize carbamoyl phosphate. Mg(2+) is required as a cofactor. It depends on Mn(2+) as a cofactor.

It is found in the cytoplasm. It catalyses the reaction hydrogencarbonate + L-glutamine + 2 ATP + H2O = carbamoyl phosphate + L-glutamate + 2 ADP + phosphate + 2 H(+). The enzyme catalyses hydrogencarbonate + NH4(+) + 2 ATP = carbamoyl phosphate + 2 ADP + phosphate + 2 H(+). It participates in amino-acid biosynthesis; L-arginine biosynthesis; carbamoyl phosphate from bicarbonate: step 1/1. In terms of biological role, large subunit of the arginine-specific carbamoyl phosphate synthase (CPSase). CPSase catalyzes the formation of carbamoyl phosphate from the ammonia moiety of glutamine, hydrogencarbonate, and phosphate donated by ATP, constituting the first step of 2 biosynthetic pathways, one leading to arginine and/or urea and the other to pyrimidine nucleotides. The large subunit (synthetase) binds the substrates ammonia (free or transferred from glutamine from the small subunit), hydrogencarbonate and ATP and carries out an ATP-coupled ligase reaction, activating hydrogencarbonate by forming carboxy phosphate which reacts with ammonia to form carbamoyl phosphate. This chain is Carbamoyl phosphate synthase arginine-specific large chain (CPA2), found in Saccharomyces cerevisiae (strain ATCC 204508 / S288c) (Baker's yeast).